We begin with the raw amino-acid sequence, 408 residues long: Argininosuccinate synthase (408 aa).

An ATP-binding site is contributed by 8-16 (AYSGGLDTS). Residue Tyr-86 participates in L-citrulline binding. Position 116 (Gly-116) interacts with ATP. Positions 118, 122, and 123 each coordinate L-aspartate. Position 122 (Asn-122) interacts with L-citrulline. 4 residues coordinate L-citrulline: Arg-126, Ser-174, Glu-259, and Tyr-271.

Belongs to the argininosuccinate synthase family. Type 1 subfamily. Homotetramer.

It localises to the cytoplasm. The catalysed reaction is L-citrulline + L-aspartate + ATP = 2-(N(omega)-L-arginino)succinate + AMP + diphosphate + H(+). Its pathway is amino-acid biosynthesis; L-arginine biosynthesis; L-arginine from L-ornithine and carbamoyl phosphate: step 2/3. The sequence is that of Argininosuccinate synthase from Leuconostoc mesenteroides subsp. mesenteroides (strain ATCC 8293 / DSM 20343 / BCRC 11652 / CCM 1803 / JCM 6124 / NCDO 523 / NBRC 100496 / NCIMB 8023 / NCTC 12954 / NRRL B-1118 / 37Y).